Consider the following 346-residue polypeptide: N-acetyl-gamma-glutamyl-phosphate reductase (346 aa).

Cys149 is an active-site residue.

The protein belongs to the NAGSA dehydrogenase family. Type 1 subfamily.

It is found in the cytoplasm. It catalyses the reaction N-acetyl-L-glutamate 5-semialdehyde + phosphate + NADP(+) = N-acetyl-L-glutamyl 5-phosphate + NADPH + H(+). It functions in the pathway amino-acid biosynthesis; L-arginine biosynthesis; N(2)-acetyl-L-ornithine from L-glutamate: step 3/4. Catalyzes the NADPH-dependent reduction of N-acetyl-5-glutamyl phosphate to yield N-acetyl-L-glutamate 5-semialdehyde. This Geobacter sulfurreducens (strain ATCC 51573 / DSM 12127 / PCA) protein is N-acetyl-gamma-glutamyl-phosphate reductase.